Here is a 285-residue protein sequence, read N- to C-terminus: Protease HtpX homolog (285 aa).

The next 2 helical transmembrane spans lie at Thr-7 to Gly-27 and Gly-30 to Asp-50. His-131 contributes to the Zn(2+) binding site. Glu-132 is a catalytic residue. Residue His-135 participates in Zn(2+) binding. Transmembrane regions (helical) follow at residues Ile-146–Gly-166 and Ile-177–Ile-197. Glu-202 is a Zn(2+) binding site.

This sequence belongs to the peptidase M48B family. Zn(2+) serves as cofactor.

Its subcellular location is the cell inner membrane. In Burkholderia cenocepacia (strain ATCC BAA-245 / DSM 16553 / LMG 16656 / NCTC 13227 / J2315 / CF5610) (Burkholderia cepacia (strain J2315)), this protein is Protease HtpX homolog.